The primary structure comprises 98 residues: ATP-dependent Clp protease adapter protein ClpS (98 aa).

It belongs to the ClpS family. Binds to the N-terminal domain of the chaperone ClpA.

Involved in the modulation of the specificity of the ClpAP-mediated ATP-dependent protein degradation. In Synechocystis sp. (strain ATCC 27184 / PCC 6803 / Kazusa), this protein is ATP-dependent Clp protease adapter protein ClpS.